Consider the following 226-residue polypeptide: MDLARVHTPRGWYDDFVNRLVNCARCPRLVSYRSTVKPLRRYESWSYWGRPVPPWGDLNARVMVVGLAPAAHGGNRTGRMFTGDASAQNLFKALFLLGLSNKPYSVSRDDGVEVRCVYITSAVKCAPPKNRPTAEEVYNCSSWLREELEAVRPRAVVALGELAWRAVLKILGATTAAFKHGEVVNAAGVRVYASYHPSPLNVNTGRLTVETLAEVLRRAAADAGCL.

Cys23, Cys26, Cys125, and Cys140 together coordinate [4Fe-4S] cluster.

This sequence belongs to the uracil-DNA glycosylase (UDG) superfamily. Type 5 (UDGb) family.

Its function is as follows. DNA glycosylase with broad substrate specificity. Can remove uracil from double-stranded DNA containing either a U/G or U/A base pair. Can also process hydroxymethyluracil (mispaired with guanine or adenine), hypoxanthine and fluorouracil. Exhibits a clear preference for double-stranded DNA substrates, but can also process uracil in single-stranded DNA, with lower efficiency. The sequence is that of Type-5 uracil-DNA glycosylase from Pyrobaculum aerophilum (strain ATCC 51768 / DSM 7523 / JCM 9630 / CIP 104966 / NBRC 100827 / IM2).